We begin with the raw amino-acid sequence, 452 residues long: Pup--protein ligase (452 aa).

Glu9 provides a ligand contact to Mg(2+). Residue Arg53 coordinates ATP. Tyr55 provides a ligand contact to Mg(2+). Asp57 (proton acceptor) is an active-site residue. Glu63 lines the Mg(2+) pocket. Positions 66 and 419 each coordinate ATP.

It belongs to the Pup ligase/Pup deamidase family. Pup-conjugating enzyme subfamily.

The enzyme catalyses ATP + [prokaryotic ubiquitin-like protein]-L-glutamate + [protein]-L-lysine = ADP + phosphate + N(6)-([prokaryotic ubiquitin-like protein]-gamma-L-glutamyl)-[protein]-L-lysine.. It participates in protein degradation; proteasomal Pup-dependent pathway. It functions in the pathway protein modification; protein pupylation. In terms of biological role, catalyzes the covalent attachment of the prokaryotic ubiquitin-like protein modifier Pup to the proteasomal substrate proteins, thereby targeting them for proteasomal degradation. This tagging system is termed pupylation. The ligation reaction involves the side-chain carboxylate of the C-terminal glutamate of Pup and the side-chain amino group of a substrate lysine. This is Pup--protein ligase from Frankia alni (strain DSM 45986 / CECT 9034 / ACN14a).